Here is a 222-residue protein sequence, read N- to C-terminus: Acyl-protein thioesterase 1 homolog 2 (222 aa).

Catalysis depends on charge relay system residues serine 116, aspartate 169, and histidine 202.

Belongs to the AB hydrolase superfamily. AB hydrolase 2 family.

The protein localises to the cytoplasm. It localises to the nucleus. It catalyses the reaction S-hexadecanoyl-L-cysteinyl-[protein] + H2O = L-cysteinyl-[protein] + hexadecanoate + H(+). Its function is as follows. Hydrolyzes fatty acids from S-acylated cysteine residues in proteins with a strong preference for palmitoylated G-alpha proteins over other acyl substrates. Mediates the deacylation of G-alpha proteins such as GPA1 in vivo, but has weak or no activity toward palmitoylated Ras proteins. Has weak lysophospholipase activity in vitro; however such activity may not exist in vivo. The chain is Acyl-protein thioesterase 1 homolog 2 from Dictyostelium discoideum (Social amoeba).